The chain runs to 90 residues: Conotoxin TxMMSK-06 (90 aa).

The N-terminal stretch at 1-22 (MMSKLGVLLTICLLLFPHTAVP) is a signal peptide. The propeptide occupies 23 to 74 (LDGDQHADQPAERLQDDISSEHHPMLNSIRRREQNQFMSFTSVKLRDSRGER). Residues 24-43 (DGDQHADQPAERLQDDISSE) are disordered. Residues 25–43 (GDQHADQPAERLQDDISSE) are compositionally biased toward basic and acidic residues. Cystine bridges form between cysteine 75/cysteine 89, cysteine 76/cysteine 85, and cysteine 81/cysteine 88. Proline 87 carries the 4-hydroxyproline modification. Cysteine 89 is subject to Cysteine amide.

Belongs to the conotoxin M superfamily. As to expression, expressed by the venom duct.

It is found in the secreted. This is Conotoxin TxMMSK-06 from Conus textile (Cloth-of-gold cone).